The primary structure comprises 212 residues: Uridine kinase (212 aa).

13–20 (GASASGKS) lines the ATP pocket.

The protein belongs to the uridine kinase family.

The protein resides in the cytoplasm. It catalyses the reaction uridine + ATP = UMP + ADP + H(+). It carries out the reaction cytidine + ATP = CMP + ADP + H(+). The protein operates within pyrimidine metabolism; CTP biosynthesis via salvage pathway; CTP from cytidine: step 1/3. Its pathway is pyrimidine metabolism; UMP biosynthesis via salvage pathway; UMP from uridine: step 1/1. The protein is Uridine kinase of Shewanella denitrificans (strain OS217 / ATCC BAA-1090 / DSM 15013).